Here is a 117-residue protein sequence, read N- to C-terminus: UPF0102 protein FTF0898c (117 aa).

The protein belongs to the UPF0102 family.

The chain is UPF0102 protein FTF0898c from Francisella tularensis subsp. tularensis (strain FSC 198).